A 187-amino-acid chain; its full sequence is Apolipophorin-3 (187 aa).

The first 17 residues, 1-17 (MAAKFIILLALFALSQA), serve as a signal peptide directing secretion. The propeptide occupies 18 to 22 (SVVRR).

This sequence belongs to the insect apolipophorin-3 family. As to quaternary structure, equilibrium between a soluble monomer and a bound lipoprotein form. Apolipophorin-3 associates with lipophorin during lipid loading until each particle contains 9 or 14 molecules of apolipophorin-3. In terms of tissue distribution, hemolymph.

The protein localises to the secreted. Assists in the loading of diacylglycerol, generated from triacylglycerol stores in the fat body through the action of adipokinetic hormone, into lipophorin, the hemolymph lipoprotein. It increases the lipid carrying capacity of lipophorin by covering the expanding hydrophobic surface resulting from diacylglycerol uptake. It thus plays a critical role in the transport of lipids during flight in several species of insects. The chain is Apolipophorin-3 from Hyphantria cunea (Fall webworm moth).